Here is a 216-residue protein sequence, read N- to C-terminus: 3-keto-L-gulonate-6-phosphate decarboxylase UlaD (216 aa).

Position 11 (Asp-11) interacts with substrate. Mg(2+) contacts are provided by Glu-33 and Asp-62. Arg-192 is a binding site for substrate.

Belongs to the HPS/KGPDC family. KGPDC subfamily. In terms of assembly, homodimer. It depends on Mg(2+) as a cofactor.

It carries out the reaction 3-dehydro-L-gulonate 6-phosphate + H(+) = L-xylulose 5-phosphate + CO2. It participates in cofactor degradation; L-ascorbate degradation; D-xylulose 5-phosphate from L-ascorbate: step 2/4. Functionally, catalyzes the decarboxylation of 3-keto-L-gulonate-6-P into L-xylulose-5-P. Is involved in the anaerobic L-ascorbate utilization. This chain is 3-keto-L-gulonate-6-phosphate decarboxylase UlaD, found in Escherichia coli O127:H6 (strain E2348/69 / EPEC).